Here is a 350-residue protein sequence, read N- to C-terminus: Melatonin receptor type 1A-A (350 aa).

The Extracellular segment spans residues 1–29 (MFMNGSSLNSSALDPSEQALQRPPWVTTT). N-linked (GlcNAc...) asparagine glycosylation is found at N4 and N9. A helical membrane pass occupies residues 30–50 (LGCFLIFTIVVDILGNLLVIF). The Cytoplasmic segment spans residues 51-63 (SVYRNKKLQNAGN). The chain crosses the membrane as a helical span at residues 64–84 (IFVVSLAVADLVVAIYPYPLV). Over 85 to 101 (LTSIFHRGWNLGYMHCQ) the chain is Extracellular. Cysteines 100 and 177 form a disulfide. The helical transmembrane segment at 102–122 (ISGFLMGVSVIGSIFNITGIA) threads the bilayer. Residues 123–144 (INCYCYICHSLKYDKLYSDKNS) lie on the Cytoplasmic side of the membrane. Residues 145–165 (VCYVLLIWALTVLAIVPNLFV) traverse the membrane as a helical segment. Residues 166 to 187 (GSLQYDPRVYSCTFEQSASSAY) lie on the Extracellular side of the membrane. A helical transmembrane segment spans residues 188 to 208 (TIAVVFFHFILPIMIVTYCYL). Residues 209–240 (RIWVLVIQVRRRVKNDNRPKITPHDVRNFVTM) lie on the Cytoplasmic side of the membrane. Residues 241–261 (FVVFVLFAVCWAPLNFIGLAV) form a helical membrane-spanning segment. At 262-267 (AISPER) the chain is on the extracellular side. Residues 268-288 (VVPLIPEWLFVASYFMAYFNS) form a helical membrane-spanning segment. The Cytoplasmic portion of the chain corresponds to 289-350 (CLNAIVYGVL…NNNQVKVDSV (62 aa)).

This sequence belongs to the G-protein coupled receptor 1 family.

It is found in the cell membrane. High affinity receptor for melatonin. The activity of this receptor is mediated by pertussis toxin sensitive G proteins that inhibits adenylate cyclase activity. This chain is Melatonin receptor type 1A-A (mtnr1aa), found in Danio rerio (Zebrafish).